A 219-amino-acid chain; its full sequence is Phosphate-specific transport system accessory protein PhoU homolog (219 aa).

The protein belongs to the PhoU family. In terms of assembly, homodimer.

The protein localises to the cytoplasm. Functionally, plays a role in the regulation of phosphate uptake. Encoded together with proteins of the phosphate-specific transport (Pst) system in the polycistronic pstSCAB-phoU operon. The protein is Phosphate-specific transport system accessory protein PhoU homolog of Clostridium acetobutylicum (strain ATCC 824 / DSM 792 / JCM 1419 / IAM 19013 / LMG 5710 / NBRC 13948 / NRRL B-527 / VKM B-1787 / 2291 / W).